Here is a 589-residue protein sequence, read N- to C-terminus: Sulfite reductase [NADPH] hemoprotein beta-component (589 aa).

[4Fe-4S] cluster contacts are provided by cysteine 443, cysteine 449, cysteine 488, and cysteine 492. Cysteine 492 contributes to the siroheme binding site.

This sequence belongs to the nitrite and sulfite reductase 4Fe-4S domain family. In terms of assembly, alpha(8)-beta(8). The alpha component is a flavoprotein, the beta component is a hemoprotein. It depends on siroheme as a cofactor. [4Fe-4S] cluster is required as a cofactor.

It catalyses the reaction hydrogen sulfide + 3 NADP(+) + 3 H2O = sulfite + 3 NADPH + 4 H(+). Its pathway is sulfur metabolism; hydrogen sulfide biosynthesis; hydrogen sulfide from sulfite (NADPH route): step 1/1. In terms of biological role, component of the sulfite reductase complex that catalyzes the 6-electron reduction of sulfite to sulfide. This is one of several activities required for the biosynthesis of L-cysteine from sulfate. The chain is Sulfite reductase [NADPH] hemoprotein beta-component from Neisseria meningitidis serogroup C (strain 053442).